A 151-amino-acid chain; its full sequence is CD-NTase-associated protein 19 (151 aa).

The next 3 helical transmembrane spans lie at 25–45, 52–72, and 127–147; these read TVFN…GVTL, VLFT…FWKL, and ISFV…FLMK.

The protein belongs to the Cap19 family.

It localises to the cell inner membrane. Membrane protein component of a CBASS (cyclic oligonucleotide-based antiphage signaling system) which provides immunity against bacteriophage. The CD-NTase protein synthesizes cyclic nucleotides in response to infection; these serve as specific second messenger signals. The signals activate a diverse range of effectors, leading to bacterial cell death and thus abortive phage infection. A type III CBASS system. Expression of this CBASS system (Cap17-CapW-CdnC-Cap7-Cap6-Cap18-Cap19) in a susceptible E.coli (strain JP313) confers resistance to bacteriophage lambda cI-. This chain is CD-NTase-associated protein 19, found in Escherichia coli.